A 281-amino-acid chain; its full sequence is Shikimate dehydrogenase (NADP(+)) (281 aa).

Shikimate is bound by residues 19 to 21 (SFS) and T66. Residue K70 is the Proton acceptor of the active site. Positions 91 and 104 each coordinate shikimate. Residues 127 to 131 (GAGGA) and I223 each bind NADP(+). Y225 contacts shikimate. An NADP(+)-binding site is contributed by G246.

Belongs to the shikimate dehydrogenase family. As to quaternary structure, homodimer.

The enzyme catalyses shikimate + NADP(+) = 3-dehydroshikimate + NADPH + H(+). It participates in metabolic intermediate biosynthesis; chorismate biosynthesis; chorismate from D-erythrose 4-phosphate and phosphoenolpyruvate: step 4/7. Its function is as follows. Involved in the biosynthesis of the chorismate, which leads to the biosynthesis of aromatic amino acids. Catalyzes the reversible NADPH linked reduction of 3-dehydroshikimate (DHSA) to yield shikimate (SA). The protein is Shikimate dehydrogenase (NADP(+)) of Methanobrevibacter smithii (strain ATCC 35061 / DSM 861 / OCM 144 / PS).